The sequence spans 194 residues: Peptidyl-tRNA hydrolase (194 aa).

Tyrosine 16 lines the tRNA pocket. Histidine 21 acts as the Proton acceptor in catalysis. Residues phenylalanine 66, asparagine 68, and asparagine 114 each coordinate tRNA.

The protein belongs to the PTH family. In terms of assembly, monomer.

The protein resides in the cytoplasm. It carries out the reaction an N-acyl-L-alpha-aminoacyl-tRNA + H2O = an N-acyl-L-amino acid + a tRNA + H(+). Functionally, hydrolyzes ribosome-free peptidyl-tRNAs (with 1 or more amino acids incorporated), which drop off the ribosome during protein synthesis, or as a result of ribosome stalling. Its function is as follows. Catalyzes the release of premature peptidyl moieties from peptidyl-tRNA molecules trapped in stalled 50S ribosomal subunits, and thus maintains levels of free tRNAs and 50S ribosomes. This Geobacter metallireducens (strain ATCC 53774 / DSM 7210 / GS-15) protein is Peptidyl-tRNA hydrolase.